Consider the following 883-residue polypeptide: MEKLSANKIRQLWIDFFREKNHFFIESKPLVPQNDDSLLWINSGVATLKDYFTGKKIPPSKRLVNSQKALRTNDIENVGLTSRHHTLFEMLGNFSIGDYFKTEAIDYAYEFLTKKLKLDPKNLFITYYDGDDITFEKWKSLGFSNEKLIKGSRKTNFWDLGQGPCGPCSEIYFDRGPKFDSRGSELIKNEIENDRFIEIWNIVFSEFNNDGQQNYTPLKSKNIDTGAGFERIVSILQDGPTNYDTDLFLPIIAEIEKSTVFQYKIENYFLKEPRQTQINKSFRIIADHIRAITLAINDGVQPSNLHRGYIIRRLIRRAYWNGKKLGISHPFLYKLVEIVGKTLDYRFDIQTISKIILNEEENFAKTLEIGYNLLESQLKINKNQIKPVTVFKLFETYGFPVELTKEILAEKNIDFDLSQLVEFQEKHSQISRAKKTTGMQKVINSLTQIKAKISDFIGYHTHHIETKISFLANKDEEVAETNGENLSYVIFEKTPFYATAGGQKHDQGWIIQNNSTIEILDVFKDKFLNNIHVFKGKIVKNQPVFLKLDTKNRLNLERNHSGTHLLFASLRQEFGSEIKQLGSDNNENRLTFDFPLNRKPSDQEIKSVENRINSYINQKIKRKYLVTNLEEAQKLNAIMTLEESEYMDPNSLRLVIFDKITTDLCGGTHIENTELLEKFTILSCQSKGSGIYRIRAVTSWNKYFEFLKGKIQEILSKISALKNKIKKIEPNFGLNLPNLVDLEQQFDYLKKIEDDLKIYYKKLLKSQLRIVKSELDANKIIEIGKFSFYLDFNLPLHNLKQIAATWREQNPRISFILGANLVNNEFLIIVSSAILASNQILEKILEIFTGSGGGNYKIAQGKIQKKPEKEVFIKLLWENITEF.

The Zn(2+) site is built by His560, His564, Cys665, and His669.

The protein belongs to the class-II aminoacyl-tRNA synthetase family. Requires Zn(2+) as cofactor.

It localises to the cytoplasm. The enzyme catalyses tRNA(Ala) + L-alanine + ATP = L-alanyl-tRNA(Ala) + AMP + diphosphate. In terms of biological role, catalyzes the attachment of alanine to tRNA(Ala) in a two-step reaction: alanine is first activated by ATP to form Ala-AMP and then transferred to the acceptor end of tRNA(Ala). Also edits incorrectly charged Ser-tRNA(Ala) and Gly-tRNA(Ala) via its editing domain. In Mesomycoplasma hyopneumoniae (strain 7448) (Mycoplasma hyopneumoniae), this protein is Alanine--tRNA ligase.